Consider the following 44-residue polypeptide: Thrombin-like enzyme F202 (44 aa).

In terms of domain architecture, Peptidase S1 spans 1–44 (VVGGDECNINEHRFLVALYANSSLLCGGTLINQEWVLIAAHCDR). A disulfide bridge connects residues C26 and C42. Catalysis depends on H41, which acts as the Charge relay system.

It belongs to the peptidase S1 family. Snake venom subfamily. In terms of assembly, monomer. In terms of processing, contains 6 disulfide bonds. In terms of tissue distribution, expressed by the venom gland.

Its subcellular location is the secreted. Its activity is regulated as follows. Enzyme activity is markedly inhibited by TLCK and PMSF, and moderately by SBTi. Platelet aggregating activity is strongly inhibited by TLCK. Thrombin-like snake venom serine protease that coagulates fibrinogen by inducing a fast degradation of the alpha chain (FGA) from human citrated plasma, and a slow degradation of beta chain (FGB). Potently induces platelet aggregation in both platelet rich plasma and washed platelet preparations in a concentration-dependent fashion. Shows amidolytic activities. The protein is Thrombin-like enzyme F202 of Crotalus durissus cascavella (Northeastern Brazilian rattlesnake).